Reading from the N-terminus, the 552-residue chain is MEKVQQTIRAARGTELQTKGWVQEAALRMLMNNLDPEVAEKPEELVVYGGIGRAARNWESYHAIVDSLKTLENDETLLVQSGKPVAIFKSHEDAPRVLLANSNLVPKWANWDHFRELEKKGLMMYGQMTAGSWIYIGTQGILQGTYETFGEAARQHFDGSLKGTVTITAGLGGMGGAQPLAVTMNGGVVIAIDVDKRSIDRRIEKRYCDKYTESLEEALAIANEYKEKKEPISIGLLGNAAEILPELVNRNIIPDLVTDQTSAHDPLNGYIPVGYTVEEAAKLREEDPERYVQLSKESMKKHVEAMLAMQEKGAITFDYGNNIRQVAFDEGLKNAFDFPGFVPAFIRPLFCEGKGPFRWVALSGDPEDIYKTDEVILREFADNEHLCNWIRMARQQVEFQGLPSRICWLGYGERAKFGRIINEMVANGELSAPIVIGRDHLDCGSVASPNRETESMKDGSDAVADWPILNALINSVNGASWVSVHHGGGVGMGYSLHAGMVIVADGTEAAAKRIERVLTSDPGMGVVRHVDAGYDLAVQTAKEKGVNIPMMK.

NAD(+) is bound by residues 49–50, Gln-127, 173–175, Asp-193, 239–240, 260–264, 270–271, and Tyr-319; these read GG, GMG, NA, QTSAH, and YI. The active site involves Cys-407. Gly-489 serves as a coordination point for NAD(+).

This sequence belongs to the urocanase family. NAD(+) is required as a cofactor.

The protein resides in the cytoplasm. It carries out the reaction 4-imidazolone-5-propanoate = trans-urocanate + H2O. The protein operates within amino-acid degradation; L-histidine degradation into L-glutamate; N-formimidoyl-L-glutamate from L-histidine: step 2/3. Its function is as follows. Catalyzes the conversion of urocanate to 4-imidazolone-5-propionate. This is Urocanate hydratase from Bacillus mycoides (strain KBAB4) (Bacillus weihenstephanensis).